A 170-amino-acid chain; its full sequence is Endoribonuclease YbeY (170 aa).

The Zn(2+) site is built by histidine 128, histidine 132, and histidine 138.

It belongs to the endoribonuclease YbeY family. The cofactor is Zn(2+).

It localises to the cytoplasm. Its function is as follows. Single strand-specific metallo-endoribonuclease involved in late-stage 70S ribosome quality control and in maturation of the 3' terminus of the 16S rRNA. The sequence is that of Endoribonuclease YbeY from Ruegeria sp. (strain TM1040) (Silicibacter sp.).